Here is a 190-residue protein sequence, read N- to C-terminus: Large ribosomal subunit protein eL19 (190 aa).

Disordered stretches follow at residues 56–85 (TVHS…KGTK) and 166–190 (NRAA…EAAN). Residues 72 to 83 (AGRHMGYGKRKG) show a composition bias toward basic residues. A compositionally biased stretch (basic and acidic residues) spans 166-184 (NRAARERRQQRLAEKKEAL).

This sequence belongs to the eukaryotic ribosomal protein eL19 family. In terms of assembly, component of the large ribosomal subunit. Mature ribosomes consist of a small (40S) and a large (60S) subunit. The 40S subunit contains about 32 different proteins and 1 molecule of RNA (18S). The 60S subunit contains 45 different proteins and 3 molecules of RNA (25S, 5.8S and 5S).

It is found in the cytoplasm. Functionally, component of the ribosome, a large ribonucleoprotein complex responsible for the synthesis of proteins in the cell. The small ribosomal subunit (SSU) binds messenger RNAs (mRNAs) and translates the encoded message by selecting cognate aminoacyl-transfer RNA (tRNA) molecules. The large subunit (LSU) contains the ribosomal catalytic site termed the peptidyl transferase center (PTC), which catalyzes the formation of peptide bonds, thereby polymerizing the amino acids delivered by tRNAs into a polypeptide chain. The nascent polypeptides leave the ribosome through a tunnel in the LSU and interact with protein factors that function in enzymatic processing, targeting, and the membrane insertion of nascent chains at the exit of the ribosomal tunnel. RPL19A may play a role in the last stages of translation initiation, in particular subunit joining and shedding/releasing factors. This Candida albicans (strain SC5314 / ATCC MYA-2876) (Yeast) protein is Large ribosomal subunit protein eL19.